Here is a 337-residue protein sequence, read N- to C-terminus: DNA-directed RNA polymerase subunit alpha (337 aa).

Positions Met-1–Glu-233 are alpha N-terminal domain (alpha-NTD). Residues Lys-265–Phe-337 form an alpha C-terminal domain (alpha-CTD) region.

This sequence belongs to the RNA polymerase alpha chain family. In plastids the minimal PEP RNA polymerase catalytic core is composed of four subunits: alpha, beta, beta', and beta''. When a (nuclear-encoded) sigma factor is associated with the core the holoenzyme is formed, which can initiate transcription.

It is found in the plastid. It localises to the chloroplast. It catalyses the reaction RNA(n) + a ribonucleoside 5'-triphosphate = RNA(n+1) + diphosphate. Functionally, DNA-dependent RNA polymerase catalyzes the transcription of DNA into RNA using the four ribonucleoside triphosphates as substrates. This chain is DNA-directed RNA polymerase subunit alpha, found in Acorus calamus (Sweet flag).